The chain runs to 91 residues: uncharacterized protein (91 aa).

Residues 1 to 25 (MLLQRIGIEHLRIWILLLLISLVPA) form the signal peptide.

This is an uncharacterized protein from Caenorhabditis elegans.